Here is a 255-residue protein sequence, read N- to C-terminus: MQVKRVKVFKIRNETEAVEDDFVAEEEPLEVRTCYDDCQTFAIIMRTPGNDKELVLGFLYSEGAIDTIDDVSSVSIKGDNVVEVRLNKPLKVKVREMIVNSSCGVCGRAFLYTLNILKCNTRVSRDVIFSLPEKLKENQEVFKITGGLHAAALFTTSGELNYLYEDVGRHNAVDKLIGRLLLERKIPASNYIMQVSGRLGYEIVSKGIKAGIPIICGISAPTSLAVDIAEEAGVTLIGFLRGNSFNIYTHKERVI.

Cys103 serves as the catalytic Cysteine persulfide intermediate.

This sequence belongs to the FdhD family.

Its subcellular location is the cytoplasm. Functionally, required for formate dehydrogenase (FDH) activity. Acts as a sulfur carrier protein that transfers sulfur from IscS to the molybdenum cofactor prior to its insertion into FDH. This is Sulfur carrier protein FdhD from Sulfurisphaera tokodaii (strain DSM 16993 / JCM 10545 / NBRC 100140 / 7) (Sulfolobus tokodaii).